The chain runs to 186 residues: MAAQKSALILLPPEDAEEIEVIVTGDVLVRGGLQVLYAGSSTEPVKCAKGARIVPDVALKDVKNKTFDIIIIPGGPGCSKLAECPVIGELLKTQVKSGGLIGAICAGPTVLLAHGIVAERVTCHYTVKDKMTEGGYKYLDDNVVISDRVITSKGPGTAFEFALKIVETLEGPEKTNSLLKPLCLAK.

Active-site residues include glutamate 20, cysteine 105, and histidine 124.

It belongs to the peptidase C56 family. DJ-1 subfamily. As to expression, expressed in various tissues, including pharyngeal muscles, pharynx-intestinal valve, ventral nerve cord, spermatheca, rectal gland, inner labial (IL) cells of head neurons, phasmid (PHA/PHB) neurons in tail and supporting sheath/socket cells, as well as in head mesodermal cells (HMC), excretory canals and coelomocytes.

The protein localises to the cytoplasm. It catalyses the reaction methylglyoxal + H2O = (R)-lactate + H(+). In terms of biological role, catalyzes the conversion of methylglyoxal (MG) or glyoxal (GO) to D-lactate or glycolic acid respectively in a single glutathione (GSH)-independent step. May play a role in detoxifying endogenously produced glyoxals. Involved in protection against glyoxal-induced cell death. Protects dopaminergic neurons from glyoxal-dependent neuronal degeneration. The sequence is that of Glutathione-independent glyoxalase DJR-1.2 from Caenorhabditis elegans.